The sequence spans 476 residues: ATP synthase subunit beta (476 aa).

154-161 (GGAGVGKT) contacts ATP.

The protein belongs to the ATPase alpha/beta chains family. F-type ATPases have 2 components, CF(1) - the catalytic core - and CF(0) - the membrane proton channel. CF(1) has five subunits: alpha(3), beta(3), gamma(1), delta(1), epsilon(1). CF(0) has four main subunits: a(1), b(1), b'(1) and c(9-12).

It is found in the cell inner membrane. The enzyme catalyses ATP + H2O + 4 H(+)(in) = ADP + phosphate + 5 H(+)(out). Its function is as follows. Produces ATP from ADP in the presence of a proton gradient across the membrane. The catalytic sites are hosted primarily by the beta subunits. This chain is ATP synthase subunit beta, found in Rhodopseudomonas palustris (strain ATCC BAA-98 / CGA009).